A 970-amino-acid polypeptide reads, in one-letter code: MLQFSLSPTLSMGFHVIAMVALLFSHVDHISAETEMEGEGNETGECTGSYYCKKGVILPIWEPQDPSFGDKIARATVYFVAMVYMFLGVSIIADRFMSSIEVITSQEKEITIKKPNGETTKTTVRIWNETVSNLTLMALGSSAPEILLSVIEVCGHNFTAGDLGPSTIVGSAAFNMFIIIALCVYVVPDGETRKIKHLRVFFVTAAWSIFAYTWLYIILSVSSPGVVEVWEGLLTFFFFPICVVFAWVADRRLLFYKYVYKRYRAGKQRGMIIEHEGDRPSSKTEIEMDGKVVNSHVDSFLDGALVLEVDERDQDDEEARREMARILKELKQKHPEKEIEQLIELANYQVLSQQQKSRAFYRIQATRLMTGAGNILKRHAADQARKAVSMHEVNTEVAENDPVSKIFFEQGTYQCLENCGTVALTIIRRGGDLTNTVFVDFRTEDGTANAGSDYEFTEGTVVFKPGETQKEIRVGIIDDDIFEEDENFLVHLSNVKVSLEASEDGILEASHVSTLACLGSPSTATVTIFDDDHAGIFTFEEPVTHVSESIGIMEVKVLRTSGARGNVIVPYKTIEGTARGGGEDFEDTCGELEFQNDEIVKTISVKVIDDEEYEKNKTFFLEIGEPRLVEMSEKKALLLNELGGFTITGKYLYGQPVFRKVHAREHPLPSTIITIADEYDDKQPLTSKEEEERRIAEMGRPILGEHTRLEVIIEESYEFKSTVDKLIKKTNLALVVGTNSWREQFIEAITVSAGEDDDDDECGEEKLPSCFDYVMHFLTVFWKVLFAFVPPTEYWNGWACFIVSILMIGLLTAFIGDLASHFACTIALKDSVTAVVFVALGTSVPDTFASKVAATQDQYADASIGNVTGSNAVNVFLGIGVAWSIAAIYHAANGEQFKVSPGTLAFSVTLFTIFAFINVGVLLYRRRPEIGGELGGPRTAKLLTSCLFVLLWLLYIFFSSLEAYCHIKGF.

The N-terminal stretch at 1–32 (MLQFSLSPTLSMGFHVIAMVALLFSHVDHISA) is a signal peptide. The Extracellular segment spans residues 33-71 (ETEMEGEGNETGECTGSYYCKKGVILPIWEPQDPSFGDK). A glycan (N-linked (GlcNAc...) asparagine) is linked at N41. The helical transmembrane segment at 72-92 (IARATVYFVAMVYMFLGVSII) threads the bilayer. Residues 93–133 (ADRFMSSIEVITSQEKEITIKKPNGETTKTTVRIWNETVSN) lie on the Cytoplasmic side of the membrane. Residues 134–154 (LTLMALGSSAPEILLSVIEVC) traverse the membrane as a helical segment. The Alpha-1 repeat unit spans residues 138-178 (ALGSSAPEILLSVIEVCGHNFTAGDLGPSTIVGSAAFNMFI). The Extracellular segment spans residues 155-167 (GHNFTAGDLGPST). The N-linked (GlcNAc...) asparagine glycan is linked to N157. The helical transmembrane segment at 168 to 188 (IVGSAAFNMFIIIALCVYVVP) threads the bilayer. The Cytoplasmic segment spans residues 189–201 (DGETRKIKHLRVF). A helical transmembrane segment spans residues 202 to 222 (FVTAAWSIFAYTWLYIILSVS). The Extracellular segment spans residues 223–228 (SPGVVE). The chain crosses the membrane as a helical span at residues 229-249 (VWEGLLTFFFFPICVVFAWVA). Over 250–797 (DRRLLFYKYV…FVPPTEYWNG (548 aa)) the chain is Cytoplasmic. Residues 251 to 270 (RRLLFYKYVYKRYRAGKQRG) are putative calmodulin-binding region. S282 and S389 each carry phosphoserine. 2 consecutive Calx-beta domains span residues 393–493 (VNTE…VHLS) and 524–624 (ATVT…LEIG). E417, D453, D478, D479, I481, E483, E486, D530, D531, D532, E548, D584, D610, E611, E612, and E715 together coordinate Ca(2+). A helical membrane pass occupies residues 798-818 (WACFIVSILMIGLLTAFIGDL). Over 819-821 (ASH) the chain is Extracellular. A helical membrane pass occupies residues 822–842 (FACTIALKDSVTAVVFVALGT). The Alpha-2 repeat unit spans residues 839 to 875 (ALGTSVPDTFASKVAATQDQYADASIGNVTGSNAVNV). The Cytoplasmic portion of the chain corresponds to 843-871 (SVPDTFASKVAATQDQYADASIGNVTGSN). The chain crosses the membrane as a helical span at residues 872–892 (AVNVFLGIGVAWSIAAIYHAA). The Extracellular segment spans residues 893-903 (NGEQFKVSPGT). The chain crosses the membrane as a helical span at residues 904–924 (LAFSVTLFTIFAFINVGVLLY). Residues 925–941 (RRRPEIGGELGGPRTAK) lie on the Cytoplasmic side of the membrane. The helical transmembrane segment at 942–962 (LLTSCLFVLLWLLYIFFSSLE) threads the bilayer. Residues 963-970 (AYCHIKGF) are Extracellular-facing.

The protein belongs to the Ca(2+):cation antiporter (CaCA) (TC 2.A.19) family. SLC8 subfamily.

The protein localises to the cell membrane. The catalysed reaction is Ca(2+)(in) + 3 Na(+)(out) = Ca(2+)(out) + 3 Na(+)(in). Its activity is regulated as follows. Activated by micromolar levels of Ca(2+). Its function is as follows. Mediates the exchange of one Ca(2+) ion against three to four Na(+) ions across the cell membrane, and thereby contributes to the regulation of cytoplasmic Ca(2+) levels and Ca(2+)-dependent cellular processes. Contributes to Ca(2+) transport during excitation-contraction coupling in muscle. In a first phase, voltage-gated channels mediate the rapid increase of cytoplasmic Ca(2+) levels due to release of Ca(2+) stores from the endoplasmic reticulum. SLC8A1 mediates the export of Ca(2+) from the cell during the next phase, so that cytoplasmic Ca(2+) levels rapidly return to baseline. Required for normal embryonic heart development and the onset of heart contractions. The polypeptide is Sodium/calcium exchanger 1 (SLC8A1) (Bos taurus (Bovine)).